A 181-amino-acid polypeptide reads, in one-letter code: Monofunctional chorismate mutase (181 aa).

A signal peptide spans 1–20 (MIRHIAIFLCSLLMCSTTFA). Positions 21–102 (DSVTSVSLGA…ASKAIQYRYL (82 aa)) constitute a Chorismate mutase domain. Arginine 38, lysine 49, aspartate 58, glutamate 62, and glutamine 98 together coordinate substrate.

It localises to the periplasm. It carries out the reaction chorismate = prephenate. It participates in metabolic intermediate biosynthesis; prephenate biosynthesis; prephenate from chorismate: step 1/1. Its function is as follows. Catalyzes the Claisen rearrangement of chorismate to prephenate. The polypeptide is Monofunctional chorismate mutase (Salmonella typhimurium).